The sequence spans 184 residues: UPF0149 protein Avin_47340 (184 aa).

Belongs to the UPF0149 family.

The protein is UPF0149 protein Avin_47340 of Azotobacter vinelandii (strain DJ / ATCC BAA-1303).